The chain runs to 182 residues: ADP-ribosylation factor-like protein 3 (182 aa).

Gly2 carries N-myristoyl glycine lipidation. Phosphoserine is present on Ser5. GTP contacts are provided by residues 24-31 (GLDNAGKT), Thr48, 67-71 (DIGGQ), Gly70, 126-129 (NKQD), and 159-161 (SAL). Mg(2+) is bound by residues Thr31 and Thr48.

It belongs to the small GTPase superfamily. Arf family. Found in a complex with ARL3, RP2 and UNC119 (or UNC119B); RP2 induces hydrolysis of GTP ARL3 in the complex, leading to the release of UNC119 (or UNC119B). Interacts with RP2; interaction is direct and stimulated with the activated GTP-bound form of ARL3. Interacts with SYS1. The GTP-bound form interacts with ARL2BP and PDE6D. Microtubule-associated protein. May interact with GOLGA4. Interacts with GGA1; the interaction recruits PKD1:PKD2 complex to trans-Golgi network and is required for ciliary targeting of PKD1:PKD2 complex. Interacts with DNAAF9. As to expression, expressed in the retina. Strongly expressed in connecting cilium, the myoid region of the inner segments (IS) and in cone photoreceptors (at protein level).

It localises to the golgi apparatus membrane. The protein resides in the cytoplasm. The protein localises to the cytoskeleton. Its subcellular location is the spindle. It is found in the nucleus. It localises to the microtubule organizing center. The protein resides in the centrosome. The protein localises to the cell projection. Its subcellular location is the cilium. In terms of biological role, small GTP-binding protein which cycles between an inactive GDP-bound and an active GTP-bound form, and the rate of cycling is regulated by guanine nucleotide exchange factors (GEF) and GTPase-activating proteins (GAP). Required for normal cytokinesis and cilia signaling. Requires assistance from GTPase-activating proteins (GAPs) like RP2 and PDE6D, in order to cycle between inactive GDP-bound and active GTP-bound forms. Required for targeting proteins to the cilium, including myristoylated NPHP3 and prenylated INPP5E. Targets NPHP3 to the ciliary membrane by releasing myristoylated NPHP3 from UNC119B cargo adapter into the cilium. Required for PKD1:PKD2 complex targeting from the trans-Golgi network to the cilium. The chain is ADP-ribosylation factor-like protein 3 (ARL3) from Homo sapiens (Human).